Consider the following 928-residue polypeptide: Protein Niban 1 (928 aa).

A lipid anchor (N-myristoyl glycine) is attached at Gly2. Ser579, Ser582, Ser596, Ser602, and Ser646 each carry phosphoserine. Over residues 580-596 the composition is skewed to polar residues; that stretch reads VSSLTDLKPPTGSNQAS. The segment at 580–600 is disordered; sequence VSSLTDLKPPTGSNQASPARR. Disordered regions lie at residues 618 to 654 and 669 to 707; these read VFQE…GTEQ and ATED…TASG. Over residues 690–701 the composition is skewed to acidic residues; that stretch reads LEDEEPAQEEPE. Ser708 is subject to Phosphoserine. Disordered regions lie at residues 723 to 877 and 899 to 928; these read PVDS…ATAS and PNPD…PSEE. Positions 801 to 818 are enriched in low complexity; the sequence is GGLTEEPLGPMEGELPGE. Basic and acidic residues predominate over residues 825–834; sequence HEGRGGKCTE. Residues 865-877 are compositionally biased toward low complexity; sequence MGGQSSAAQATAS. Residues 905–915 show a composition bias toward basic and acidic residues; that stretch reads LSHKDDVKEGE. Residue Ser926 is modified to Phosphoserine.

The protein belongs to the Niban family. As to expression, expressed in various types of thyroid tumor such as papillary thyroid carcinomas and oxyphilic thyroid tumors but not in normal thyroid tissue (at protein level). Strongly expressed in heart, skeletal muscle, pancreas, white blood cells and prostate with moderate expression in colon and spleen. Expressed in renal carcinoma cells but not in normal kidney.

The protein localises to the cytoplasm. Its subcellular location is the membrane. Regulates phosphorylation of a number of proteins involved in translation regulation including EIF2A, EIF4EBP1 and RPS6KB1. May be involved in the endoplasmic reticulum stress response. This Homo sapiens (Human) protein is Protein Niban 1.